The sequence spans 168 residues: MTVAVYPGSFDPITKGHMDIVERAAQIFHEVIVAVVINPNKKPLFTMDERVEMIRMAVSHISNVRVESFSGLLVDFTRKQGARAIVRGLRAVSDFEVEFQMALMNKRLYPEVETVFMATHTDYAFLSSSMVKEVASFGGDVSDYLPPAVLARMAEKYGDTVRGKAPVR.

A substrate-binding site is contributed by Ser-9. ATP contacts are provided by residues 9–10 (SF) and His-17. Positions 41, 73, and 87 each coordinate substrate. Residues 88–90 (GLR), Glu-98, and 123–129 (YAFLSSS) contribute to the ATP site.

Belongs to the bacterial CoaD family. In terms of assembly, homohexamer. It depends on Mg(2+) as a cofactor.

It localises to the cytoplasm. It catalyses the reaction (R)-4'-phosphopantetheine + ATP + H(+) = 3'-dephospho-CoA + diphosphate. Its pathway is cofactor biosynthesis; coenzyme A biosynthesis; CoA from (R)-pantothenate: step 4/5. In terms of biological role, reversibly transfers an adenylyl group from ATP to 4'-phosphopantetheine, yielding dephospho-CoA (dPCoA) and pyrophosphate. The polypeptide is Phosphopantetheine adenylyltransferase (Heliobacterium modesticaldum (strain ATCC 51547 / Ice1)).